A 426-amino-acid chain; its full sequence is Phosphomethylpyrimidine synthase (426 aa).

Residues Met-94, Tyr-123, His-162, 184–186 (SRG), 225–228 (NGMR), and Glu-264 each bind substrate. His-268 lines the Zn(2+) pocket. Position 291 (Tyr-291) interacts with substrate. His-332 lines the Zn(2+) pocket. Residues Cys-406, Cys-409, and Cys-413 each coordinate [4Fe-4S] cluster.

It belongs to the ThiC family. [4Fe-4S] cluster serves as cofactor.

It carries out the reaction 5-amino-1-(5-phospho-beta-D-ribosyl)imidazole + S-adenosyl-L-methionine = 4-amino-2-methyl-5-(phosphooxymethyl)pyrimidine + CO + 5'-deoxyadenosine + formate + L-methionine + 3 H(+). It participates in cofactor biosynthesis; thiamine diphosphate biosynthesis. Catalyzes the synthesis of the hydroxymethylpyrimidine phosphate (HMP-P) moiety of thiamine from aminoimidazole ribotide (AIR) in a radical S-adenosyl-L-methionine (SAM)-dependent reaction. This chain is Phosphomethylpyrimidine synthase, found in Methanospirillum hungatei JF-1 (strain ATCC 27890 / DSM 864 / NBRC 100397 / JF-1).